The primary structure comprises 193 residues: Ion-translocating oxidoreductase complex subunit A (193 aa).

6 helical membrane passes run 5–25 (ALLL…FLGL), 39–59 (LGMG…SWML), 62–82 (WLLA…LVIA), 102–122 (SLGI…VALL), 134–154 (VLFG…FAGL), and 172–192 (AAFI…GLVA).

It belongs to the NqrDE/RnfAE family. The complex is composed of six subunits: RnfA, RnfB, RnfC, RnfD, RnfE and RnfG.

The protein resides in the cell inner membrane. Part of a membrane-bound complex that couples electron transfer with translocation of ions across the membrane. This is Ion-translocating oxidoreductase complex subunit A from Aromatoleum aromaticum (strain DSM 19018 / LMG 30748 / EbN1) (Azoarcus sp. (strain EbN1)).